The sequence spans 315 residues: beta-hydroxyaspartate dehydratase (315 aa).

N6-(pyridoxal phosphate)lysine is present on lysine 53. Pyridoxal 5'-phosphate is bound by residues asparagine 80, 179-183 (GGGGM), and threonine 303.

Requires pyridoxal 5'-phosphate as cofactor.

It catalyses the reaction (3S)-3-hydroxy-D-aspartate = iminosuccinate + H2O. In terms of biological role, catalyzes the dehydration of (2R,3S)-beta-hydroxyaspartate ((3S)-3-hydroxy-D-aspartate) into iminosuccinate. Is essential for the growth of P.denitrificans in the presence of glycolate and glyoxylate since it functions in glyoxylate assimilation via the beta-hydroxyaspartate cycle (BHAC). The polypeptide is beta-hydroxyaspartate dehydratase (Paracoccus denitrificans (strain Pd 1222)).